We begin with the raw amino-acid sequence, 593 residues long: MQPQPHISPNTATAAISAALESQRSRKNRGSYNCGRCGQPKKGHVCLLTAPPDIPTTPIASEPVSCISAAASSSRSTVLSLTAAPSSRQTFTHLRRALSFDDVDARNSLDESDLDAASMDLDLQLDTDIVQPGRFHAVGLWEVLKRLPPSSLLMAARVCKGWRETSRKMWKAAEELRIRVPERAQIGYIGSLLQKCPRLIRLSLKIESDFDATTLACIAFSCPNLEVLEITTSGAAVNRISGDELSRFVANKRGLTSLKMEGCSNLGGFSLSSSSLSTLWLSDLHSLSKMIFNCPNLTEISLEFSRQEDDSTDLVTMVDGLGRTCTRLQNIHIASLKLSHTVVLSLTAVNFRYLRMLSLVLGINITDASVAAISSGYKNLELLDLSGSSITDTGLGMICDVLPDTLSKLLVALCPNITSSGIQFATAQLPLLELMDCGMTVSDPNSDNPTFVENPSPHKTPGYNQKMFIKHKRLKKLSLWGCSSLDALFLNCPELMDLNLNLCSNLHPESLVLQCPKLQLVYASGCQGLLTGAIRKQVSENFSAGENHMPRKRLADASKRIQALPSLYQETREDGIYAGKRRKLEKEMCTIIH.

The 58-residue stretch at 120–177 folds into the F-box domain; that stretch reads DLDLQLDTDIVQPGRFHAVGLWEVLKRLPPSSLLMAARVCKGWRETSRKMWKAAEELR. 9 LRR repeats span residues 178–206, 207–232, 237–262, 276–304, 335–361, 362–387, 414–439, 477–502, and 503–525; these read IRVP…SLKI, ESDF…EITT, VNRI…KMEG, LSTL…SLEF, SLKL…SLVL, GINI…DLSG, CPNI…DCGM, LSLW…NLNL, and CSNL…YASG.

Part of a SCF (ASK-cullin-F-box) protein ligase complex. Interacts with SKP1A/ASK1, KRP4, KRP6 and KRP7. As to expression, expressed in developing pollen.

It is found in the nucleus. It participates in protein modification; protein ubiquitination. Its function is as follows. Essential protein for male fertility. Component of the SCF(ASK-cullin-F-box) E3 ubiquitin ligase complex SCF(FBL17), which mediates the ubiquitination and subsequent proteasomal degradation of target proteins. Enables the switch in cell cycle control leading to male germ cell lineage formation from microspores after meiosis. Targets CDKA-1 inhibitors the degradation specifically in male germ cells (e.g. KRP6 and KRP7) and thus enables CDKA-1 activation and germ cell S-phase progression. Promotes twin sperm cell production and double fertilization. This is F-box/LRR-repeat protein 17 (FBL17) from Arabidopsis thaliana (Mouse-ear cress).